A 508-amino-acid chain; its full sequence is Photosystem II CP47 reaction center protein (508 aa).

6 consecutive transmembrane segments (helical) span residues 21 to 36 (AVHI…WAGS), 101 to 115 (IVFS…IWHW), 140 to 156 (GIHL…FGAF), 203 to 218 (IAAG…FHLS), 237 to 252 (VLSS…AFVV), and 457 to 472 (TFAL…HGAR).

It belongs to the PsbB/PsbC family. PsbB subfamily. PSII is composed of 1 copy each of membrane proteins PsbA, PsbB, PsbC, PsbD, PsbE, PsbF, PsbH, PsbI, PsbJ, PsbK, PsbL, PsbM, PsbT, PsbX, PsbY, PsbZ, Psb30/Ycf12, at least 3 peripheral proteins of the oxygen-evolving complex and a large number of cofactors. It forms dimeric complexes. It depends on Binds multiple chlorophylls. PSII binds additional chlorophylls, carotenoids and specific lipids. as a cofactor.

The protein resides in the plastid. The protein localises to the chloroplast thylakoid membrane. Functionally, one of the components of the core complex of photosystem II (PSII). It binds chlorophyll and helps catalyze the primary light-induced photochemical processes of PSII. PSII is a light-driven water:plastoquinone oxidoreductase, using light energy to abstract electrons from H(2)O, generating O(2) and a proton gradient subsequently used for ATP formation. The polypeptide is Photosystem II CP47 reaction center protein (Hordeum vulgare (Barley)).